A 2122-amino-acid chain; its full sequence is Unique GC organizer UGO (2122 aa).

5 helical membrane passes run 19 to 39 (FAVAVALLDLALYVLIGTNSL), 50 to 70 (LFGMITSALIFIIALCGFVIV), 82 to 102 (TYIMPVLIICNIASVFYMQLI), 115 to 135 (VLTFLITGYPYVWLVAFVLIG), and 145 to 165 (VVCSVSLGSSCPPSVWVDVGL). 13 disordered regions span residues 337–403 (AALH…HRSA), 422–532 (FRGL…GPFV), 565–591 (DLRESRERTARAASHDTHAAADDSGLQ), 627–762 (HRRG…GRAN), 785–815 (HAASSEEERPVRPARHSWRRGSGDSRECSAS), 848–870 (MSRRRRREGKSRPHASSVSRAER), 903–949 (SKEG…ASAN), 999–1046 (RNET…LHSR), 1068–1308 (PSDL…HEAV), 1328–1368 (AGLS…SEEE), 1515–1540 (ANSSTAVSSSLPDSTAWQGSGAAASA), 1560–1608 (AAEH…TPHT), and 1639–1727 (QGLG…TFFG). The span at 363–374 (RSNTLRGCSGQV) shows a compositional bias: polar residues. 3 stretches are compositionally biased toward basic and acidic residues: residues 503-525 (LRMDEQSGDADKASSDVSRDPAK), 565-585 (DLRESRERTARAASHDTHAAA), and 632-645 (GARDGELVFERGEP). Over residues 672-687 (RLSRSRRHKTRTYRRG) the composition is skewed to basic residues. Residues 690–699 (SDGTTAGTSD) show a composition bias toward low complexity. The segment covering 707 to 720 (LEDEGSDSGQESES) has biased composition (acidic residues). Residues 725-735 (RRRMRSSRNRR) are compositionally biased toward basic residues. Low complexity predominate over residues 741 to 750 (EDSSSGTSVR). Residues 751-760 (SEGRHCREGR) are compositionally biased toward basic and acidic residues. N-linked (GlcNAc...) asparagine glycosylation is present at Asn-762. Residues 848–860 (MSRRRRREGKSRP) are compositionally biased toward basic residues. Polar residues-rich tracts occupy residues 999 to 1011 (RNETEMTASSPAT) and 1072 to 1097 (SLFTTPPASPSSLNEVQASRSSSARI). Asn-1000 carries an N-linked (GlcNAc...) asparagine glycan. An N-linked (GlcNAc...) asparagine glycan is attached at Asn-1165. Positions 1220–1261 (SREDLVGEADSHVSPEKEVFVSSRREKREEQVPRSRREERRD) are enriched in basic and acidic residues. Positions 1262 to 1276 (RRGRRWRRGRRRRKA) are enriched in basic residues. Composition is skewed to basic and acidic residues over residues 1277–1289 (RECSETEERRDSS) and 1345–1359 (GDMRERQIYETHSDG). The span at 1515 to 1527 (ANSSTAVSSSLPD) shows a compositional bias: polar residues. Asn-1516 carries an N-linked (GlcNAc...) asparagine glycan. Low complexity-rich tracts occupy residues 1528–1540 (STAWQGSGAAASA) and 1597–1608 (TQTPQTPQTPHT). Positions 1684-1693 (LSATPSTRLQ) are enriched in polar residues. The next 5 helical transmembrane spans lie at 1859–1879 (VAWLLFLICFYATAFHGLLRL), 1956–1976 (MLALSFLQFVYAVFDNTWHLI), 1989–2009 (IIPASPSLEIAAVQTVYILAV), 2017–2037 (IFLLYIITYIIIFFVALPPGV), and 2040–2060 (VQLFTISMAGWLFTCVGGQLF). The tract at residues 2102-2122 (DEGSEDEVSMGSGHLVGDRSA) is disordered.

Interacts with guanylate cyclase GC; the interaction regulates guanylate cyclase GC trafficking and catalytic activity.

It localises to the cell membrane. Its function is as follows. In tachyzoites, required for the cellular trafficking of guanylate cyclase GC to the cell membrane and for GC guanylate cyclase activity. The sequence is that of Unique GC organizer UGO from Toxoplasma gondii (strain ATCC 50853 / GT1).